Reading from the N-terminus, the 266-residue chain is 4-hydroxy-tetrahydrodipicolinate reductase (266 aa).

Residue 10-15 (GPRGRM) coordinates NAD(+). Residue lysine 38 participates in NADP(+) binding. NAD(+) is bound by residues 99-101 (GTT) and 125-128 (APNF). Histidine 155 functions as the Proton donor/acceptor in the catalytic mechanism. (S)-2,3,4,5-tetrahydrodipicolinate is bound at residue histidine 156. Lysine 159 acts as the Proton donor in catalysis. Position 165-166 (165-166 (GT)) interacts with (S)-2,3,4,5-tetrahydrodipicolinate.

Belongs to the DapB family.

Its subcellular location is the cytoplasm. It catalyses the reaction (S)-2,3,4,5-tetrahydrodipicolinate + NAD(+) + H2O = (2S,4S)-4-hydroxy-2,3,4,5-tetrahydrodipicolinate + NADH + H(+). It carries out the reaction (S)-2,3,4,5-tetrahydrodipicolinate + NADP(+) + H2O = (2S,4S)-4-hydroxy-2,3,4,5-tetrahydrodipicolinate + NADPH + H(+). It functions in the pathway amino-acid biosynthesis; L-lysine biosynthesis via DAP pathway; (S)-tetrahydrodipicolinate from L-aspartate: step 4/4. In terms of biological role, catalyzes the conversion of 4-hydroxy-tetrahydrodipicolinate (HTPA) to tetrahydrodipicolinate. The protein is 4-hydroxy-tetrahydrodipicolinate reductase of Bacillus cereus (strain Q1).